A 78-amino-acid polypeptide reads, in one-letter code: Antitoxin FitA (78 aa).

Homodimer in the absence of FitB; forms a heterodimer with FitB; 4 FitAB heterodimers form a complex that binds to fitAB promoter DNA. The complex is also seen in solution.

In terms of biological role, antitoxin component of a type II toxin-antitoxin (TA) system. Plays a role in the speed with which bacteria traverse human epithelial cells; disruption of the locus increases the speed of trafficking about 2-4-fold. Binds to its own promoter, binding affinity of the FitAB complex is 20-30-fold higher than FitA alone. No nuclease activity was observed for the FitAB complex, perhaps because FitA (the antitoxin) prevents metal binding and thus catalysis by FitB. The polypeptide is Antitoxin FitA (fitA) (Neisseria gonorrhoeae (strain ATCC 700825 / FA 1090)).